The primary structure comprises 201 residues: 3-isopropylmalate dehydratase small subunit (201 aa).

This sequence belongs to the LeuD family. LeuD type 1 subfamily. Heterodimer of LeuC and LeuD.

It catalyses the reaction (2R,3S)-3-isopropylmalate = (2S)-2-isopropylmalate. It functions in the pathway amino-acid biosynthesis; L-leucine biosynthesis; L-leucine from 3-methyl-2-oxobutanoate: step 2/4. In terms of biological role, catalyzes the isomerization between 2-isopropylmalate and 3-isopropylmalate, via the formation of 2-isopropylmaleate. This chain is 3-isopropylmalate dehydratase small subunit, found in Allorhizobium ampelinum (strain ATCC BAA-846 / DSM 112012 / S4) (Agrobacterium vitis (strain S4)).